Here is a 291-residue protein sequence, read N- to C-terminus: MLKETVDGLNIKPDGVYVDVTFGGGGHSKEILSRLGPEGKLFGFDQDEDAWENALPDERFTLIQENFRYIKRFLRFNGIKKVDGILADLGVSSHQFDVPERGFSTRFDAELDMRMSKKNDLTAFNIVNEYDETNLRRIFAEYGELGNALAIARAIIEAREKEKIVNTEDLKQVLARFLPNNKAHKILAQIYQSIRIEVNQEMDVLKEFLEQSLEVLDQGGRLSVISYHSLEDRLVKRFMKNGLFEGEPEKDFFGRFEVPFKLIGKMIIPSNQEIKINNRARSAKLRIAEKK.

S-adenosyl-L-methionine contacts are provided by residues Gly-25–His-27, Asp-45, Phe-73, Asp-88, and Gln-95.

Belongs to the methyltransferase superfamily. RsmH family.

It is found in the cytoplasm. It catalyses the reaction cytidine(1402) in 16S rRNA + S-adenosyl-L-methionine = N(4)-methylcytidine(1402) in 16S rRNA + S-adenosyl-L-homocysteine + H(+). In terms of biological role, specifically methylates the N4 position of cytidine in position 1402 (C1402) of 16S rRNA. This is Ribosomal RNA small subunit methyltransferase H from Flavobacterium psychrophilum (strain ATCC 49511 / DSM 21280 / CIP 103535 / JIP02/86).